We begin with the raw amino-acid sequence, 105 residues long: uncharacterized protein (105 aa).

The tract at residues 47 to 105 is disordered; that stretch reads ENASAPRIQPSVTPSPAAPPSTDQLMMEKMMGSAGLNKYRKQEKEKQEEDGNGESLFDF. Positions 86–95 are enriched in basic and acidic residues; sequence RKQEKEKQEE.

This is an uncharacterized protein from Bacillus subtilis (strain 168).